The chain runs to 364 residues: Probable dual-specificity RNA methyltransferase RlmN (364 aa).

The active-site Proton acceptor is glutamate 106. The Radical SAM core domain maps to 112–351 (YPHRNTVCIS…CTVRDTRGRE (240 aa)). Residues cysteine 119 and cysteine 356 are joined by a disulfide bond. Residues cysteine 126, cysteine 130, and cysteine 133 each coordinate [4Fe-4S] cluster. S-adenosyl-L-methionine is bound by residues 177–178 (GE), serine 211, 234–236 (SLH), and asparagine 313. Cysteine 356 acts as the S-methylcysteine intermediate in catalysis.

This sequence belongs to the radical SAM superfamily. RlmN family. [4Fe-4S] cluster serves as cofactor.

The protein resides in the cytoplasm. The catalysed reaction is adenosine(2503) in 23S rRNA + 2 reduced [2Fe-2S]-[ferredoxin] + 2 S-adenosyl-L-methionine = 2-methyladenosine(2503) in 23S rRNA + 5'-deoxyadenosine + L-methionine + 2 oxidized [2Fe-2S]-[ferredoxin] + S-adenosyl-L-homocysteine. The enzyme catalyses adenosine(37) in tRNA + 2 reduced [2Fe-2S]-[ferredoxin] + 2 S-adenosyl-L-methionine = 2-methyladenosine(37) in tRNA + 5'-deoxyadenosine + L-methionine + 2 oxidized [2Fe-2S]-[ferredoxin] + S-adenosyl-L-homocysteine. In terms of biological role, specifically methylates position 2 of adenine 2503 in 23S rRNA and position 2 of adenine 37 in tRNAs. In Mycolicibacterium paratuberculosis (strain ATCC BAA-968 / K-10) (Mycobacterium paratuberculosis), this protein is Probable dual-specificity RNA methyltransferase RlmN.